A 492-amino-acid polypeptide reads, in one-letter code: Catalase-2 (492 aa).

Active-site residues include H65 and N138. Y348 lines the heme pocket.

It belongs to the catalase family. In terms of assembly, homotetramer and heterotetramer. At least six or seven isozymes are produced from a mixture of 3 gene products. Interacts with NCA1. Interacts with LSD1. It depends on heme as a cofactor.

The protein resides in the cytoplasm. It is found in the cytosol. Its subcellular location is the peroxisome matrix. The catalysed reaction is 2 H2O2 = O2 + 2 H2O. Functionally, catalyzes the degradation of hydrogen peroxide (H(2)O(2)) generated by peroxisomal oxidases to water and oxygen, thereby protecting cells from the toxic effects of hydrogen peroxide. This is Catalase-2 (CAT2) from Arabidopsis thaliana (Mouse-ear cress).